The sequence spans 342 residues: Zinc transporter ZIP11 (342 aa).

7 consecutive transmembrane segments (helical) span residues 12 to 32 (LLGT…VFIF), 44 to 64 (LGFA…APAV), 72 to 92 (GFGA…AAFV), 194 to 214 (IALL…AVGV), 263 to 285 (FWYG…FAVV), 290 to 307 (ILPY…YVVM), and 322 to 342 (LASW…VGLG).

The protein belongs to the ZIP transporter (TC 2.A.5) family. As to expression, highly expressed in the testes and portions of the digestive system including the stomach, ileum and cecum. In contrast, expressed at very low levels in liver, duodenum, jejunum, and colon.

It is found in the cell membrane. The protein localises to the nucleus. It localises to the cytoplasm. Its subcellular location is the golgi apparatus. It catalyses the reaction Zn(2+)(in) = Zn(2+)(out). It carries out the reaction Cu(2+)(in) = Cu(2+)(out). Its function is as follows. Zinc importer that regulates cytosolic zinc concentration either via zinc influx from the extracellular compartment or efflux from intracellular organelles such as Golgi apparatus. May transport copper ions as well. The transport mechanism remains to be elucidated. This Mus musculus (Mouse) protein is Zinc transporter ZIP11 (Slc39a11).